The primary structure comprises 1010 residues: BrkA autotransporter (1010 aa).

The signal sequence occupies residues 1 to 42 (MYLDRFRQCPSSLQIPRSAWRLHALAAALALAGMARLAPAAA). One can recognise an Autotransporter domain in the interval 742-1010 (LRADAGGPWA…SFHAGYRYSF (269 aa)).

The protein resides in the periplasm. It is found in the secreted. Its subcellular location is the cell surface. It localises to the cell outer membrane. Its function is as follows. Inhibits the classical pathway of complement activation and prevents accumulation of deposited C4. This chain is BrkA autotransporter, found in Bordetella pertussis (strain Tohama I / ATCC BAA-589 / NCTC 13251).